The chain runs to 419 residues: Methionine aminopeptidase 2 (419 aa).

The disordered stretch occupies residues 1-69 (MSTNSSNPNE…KITAIDNSYP (69 aa)). Residues 11–29 (VMEKVQDLKIDDSKPKVDS) show a composition bias toward basic and acidic residues. A compositionally biased stretch (acidic residues) spans 30 to 41 (EEQPEAESDGES). Residues 48-61 (KKKKKKKSKKKKKI) show a composition bias toward basic residues. Substrate is bound at residue His-172. The a divalent metal cation site is built by Asp-192, Asp-203, and His-272. His-280 contacts substrate. A divalent metal cation contacts are provided by Glu-305 and Glu-400.

This sequence belongs to the peptidase M24A family. Methionine aminopeptidase eukaryotic type 2 subfamily. Co(2+) is required as a cofactor. Requires Zn(2+) as cofactor. Mn(2+) serves as cofactor. The cofactor is Fe(2+).

It is found in the cytoplasm. It carries out the reaction Release of N-terminal amino acids, preferentially methionine, from peptides and arylamides.. Its function is as follows. Cotranslationally removes the N-terminal methionine from nascent proteins. The N-terminal methionine is often cleaved when the second residue in the primary sequence is small and uncharged (Met-Ala-, Cys, Gly, Pro, Ser, Thr, or Val). The polypeptide is Methionine aminopeptidase 2 (Debaryomyces hansenii (strain ATCC 36239 / CBS 767 / BCRC 21394 / JCM 1990 / NBRC 0083 / IGC 2968) (Yeast)).